The sequence spans 200 residues: Ras-related protein RHN1 (200 aa).

Residues 17–25 (GDMGAGKSS), 36–42 (LEFQEST), 65–69 (DTAGQ), 123–126 (NKAD), and 153–155 (SAK) each bind GTP. An Effector region motif is present at residues 39 to 47 (QESTIGAAF). S-geranylgeranyl cysteine attachment occurs at residues Cys198 and Cys199.

It belongs to the small GTPase superfamily. Rab family. As to expression, high in stem, root, and inflorescence.

It is found in the cell membrane. Functionally, protein transport. Probably involved in vesicular traffic. This is Ras-related protein RHN1 (RHN1) from Nicotiana plumbaginifolia (Leadwort-leaved tobacco).